Here is a 1171-residue protein sequence, read N- to C-terminus: ATP-dependent helicase/deoxyribonuclease subunit B (1171 aa).

Positions 1 to 343 constitute a UvrD-like helicase ATP-binding domain; that stretch reads MSLRFVIGRA…LVAEENYRYR (343 aa). 8 to 15 provides a ligand contact to ATP; it reads GRAGSGKS. A UvrD-like helicase C-terminal domain is found at 281 to 587; that stretch reads MEQPRFHSPA…QFANIPPSLD (307 aa). The [4Fe-4S] cluster site is built by C805, C1129, C1132, and C1138.

This sequence belongs to the helicase family. AddB/RexB type 1 subfamily. As to quaternary structure, heterodimer of AddA and AddB. It depends on Mg(2+) as a cofactor. The cofactor is [4Fe-4S] cluster.

Its function is as follows. The heterodimer acts as both an ATP-dependent DNA helicase and an ATP-dependent, dual-direction single-stranded exonuclease. Recognizes the chi site generating a DNA molecule suitable for the initiation of homologous recombination. The AddB subunit has 5' -&gt; 3' nuclease activity but not helicase activity. The protein is ATP-dependent helicase/deoxyribonuclease subunit B of Bacillus thuringiensis (strain Al Hakam).